We begin with the raw amino-acid sequence, 1056 residues long: ATP-dependent helicase wrn-1 (1056 aa).

The interval 1–102 (MISDDDDLPS…SSSDDSDQGD (102 aa)) is disordered. A run of 2 repeats spans residues 17-26 (NEELPETEPE) and 28-37 (NDELPETEPE). Positions 17 to 37 (NEELPETEPEDNDELPETEPE) are 2 X 10 AA repeats of N-[ED]-E-L-P-E-T-E-P-E. The span at 19–38 (ELPETEPEDNDELPETEPES) shows a compositional bias: acidic residues. Residues 43-53 (PTVTSNKTENQ) show a composition bias toward polar residues. Residues 54–63 (VADEDYDSFD) show a composition bias toward acidic residues. Positions 236–406 (VRNVLGGKDQ…IANLRLRKPL (171 aa)) constitute a Helicase ATP-binding domain. Residue 249-256 (MSTGYGKS) coordinates ATP. A DEAH box motif is present at residues 348 to 351 (DEAH). Residues 427–583 (MAEDLGLFMK…NLTMMLRQLE (157 aa)) enclose the Helicase C-terminal domain. Residues Cys591, Cys614, Cys615, and Cys618 each contribute to the Zn(2+) site. The interval 749–771 (KEKAAPSTVPGASRSQSTKSSTE) is disordered. Residues 761–771 (SRSQSTKSSTE) show a composition bias toward polar residues. The HRDC domain maps to 806–886 (PEKIDQLRSR…VQFSKETGIA (81 aa)). The interval 1018–1056 (QEKPDIQSMPSTSNPSTIKTVPSTPSSSLRAPPLKKFKL) is disordered. Positions 1025 to 1046 (SMPSTSNPSTIKTVPSTPSSSL) are enriched in polar residues.

Belongs to the helicase family. RecQ subfamily. The cofactor is Zn(2+).

The protein resides in the nucleus. It catalyses the reaction Couples ATP hydrolysis with the unwinding of duplex DNA by translocating in the 3'-5' direction.. The enzyme catalyses ATP + H2O = ADP + phosphate + H(+). Functionally, essential for the formation of DNA replication focal centers; stably associates with foci elements generating binding sites for RP-A. Exhibits a magnesium-dependent ATP-dependent 3'-5' DNA-helicase activity. May be involved in the control of genomic stability. This is ATP-dependent helicase wrn-1 (wrn-1) from Caenorhabditis elegans.